The sequence spans 709 residues: MDSGSGFDPDTGNNKGNGSGGGNGYGERKFGAFFKRVEPFLPKKDLNPRDLRSWAKKTGFVSDYSGETSTSTRTKFGESSDFDLPKGRDQVVTGSSHKTEIDPILGRNRPEIEHVTGSEPVSREEEERRLNRNEATPETENEGGKINKDLENGFYYPGGGGESSEDGQWPKPILMKFGLRDNPGFVPLIYYGLQHYLSLVGSLVFIPLVIVPAMDGSDKDTASVISTMLLLTGVTTILHCYFGTRLPLVQGSSFVYLAPVLVVINSEEFRNLTEHKFRDTMRELQGAIIVGSLFQCILGFSGLMSLLLRFINPVVVAPTVAAVGLAFFSYGFPQAGTCVEISVPLILLLLIFTLYLRGVSLFGHRLFRIYAVPLSALLIWTYAFFLTVGGAYDYRGCNADIPSSNILIDECKKHVYTMKHCRTDASNAWRTASWVRIPYPFQWGFPNFHMRTSIIMIFVSLVASVDSVGTYHSASMIVNAKRPTRGIVSRGIALEGFCSLLAGIWGSGTGSTTLTENIHTINITKVASRRALVIGAMFLIVLSFLGKLGAILASIPQALAASVLCFIWALTVSLGLSNLRYTQTASFRNITIVGVSLFLGLSIPAYFQQYQPLSSLILPSYYIPFGAASSGPFQTGIEQLDFAMNAVLSLNMVVTFLLAFILDNTVPGSKEERGVYVWTRAEDMQMDPEMRADYSLPRKFAQIFGCRCC.

Disordered stretches follow at residues 1–28 (MDSG…YGER) and 58–167 (TGFV…SEDG). The segment covering 15-25 (KGNGSGGGNGY) has biased composition (gly residues). The span at 65 to 74 (SGETSTSTRT) shows a compositional bias: polar residues. Composition is skewed to basic and acidic residues over residues 75 to 89 (KFGE…KGRD), 108 to 132 (NRPE…RLNR), and 142 to 151 (EGGKINKDLE). 12 helical membrane passes run 196–216 (YLSL…AMDG), 222–242 (ASVI…HCYF), 246–266 (LPLV…VINS), 288–308 (IIVG…SLLL), 310–330 (FINP…FFSY), 336–356 (GTCV…TLYL), 369–389 (IYAV…LTVG), 454–474 (IIMI…YHSA), 532–552 (LVIG…GAIL), 555–575 (IPQA…VSLG), 590–610 (ITIV…FQQY), and 642–662 (FAMN…AFIL).

It belongs to the nucleobase:cation symporter-2 (NCS2) (TC 2.A.40) family. In terms of tissue distribution, expressed in leaf primordia and vasculature of pedicels, rosette leaves, sepals, carpels and siliques. Expressed in the root central cylinder.

It localises to the membrane. The protein is Nucleobase-ascorbate transporter 11 (NAT11) of Arabidopsis thaliana (Mouse-ear cress).